The following is a 364-amino-acid chain: Uroporphyrinogen decarboxylase (364 aa).

Positions 34, 36, 38, 47, 83, 161, 216, and 336 each coordinate coproporphyrinogen I. The coproporphyrinogen III site is built by arginine 34, alanine 36, and arginine 38. Coproporphyrinogen III is bound by residues aspartate 83, tyrosine 161, serine 216, and histidine 336.

It belongs to the uroporphyrinogen decarboxylase family. Homodimer.

It is found in the cytoplasm. It localises to the cytosol. The enzyme catalyses uroporphyrinogen III + 4 H(+) = coproporphyrinogen III + 4 CO2. It catalyses the reaction uroporphyrinogen I + 4 H(+) = coproporphyrinogen I + 4 CO2. It functions in the pathway porphyrin-containing compound metabolism; protoporphyrin-IX biosynthesis; coproporphyrinogen-III from 5-aminolevulinate: step 4/4. Functionally, catalyzes the sequential decarboxylation of the four acetate side chains of uroporphyrinogen to form coproporphyrinogen and participates in the fifth step in the heme biosynthetic pathway. Isomer I or isomer III of uroporphyrinogen may serve as substrate, but only coproporphyrinogen III can ultimately be converted to heme. In vitro also decarboxylates pentacarboxylate porphyrinogen I. In Rattus norvegicus (Rat), this protein is Uroporphyrinogen decarboxylase.